A 413-amino-acid chain; its full sequence is Alpha-1-antiproteinase (413 aa).

The first 24 residues, 1 to 24, serve as a signal peptide directing secretion; it reads MTPSISWRLLLLAGLCCLVPSYLA. The residue at position 33 (serine 33) is a Phosphoserine. Asparagine 64, asparagine 101, and asparagine 265 each carry an N-linked (GlcNAc...) asparagine glycan. The tract at residues 368–387 is RCL; the sequence is ATTIVEAVFMSLPPILHFNH. Serine 378 is modified (phosphoserine).

The protein belongs to the serpin family. Interacts with CELA2A. Interacts with ERGIC3 and LMAN1/ERGIC53. Interacts with PRSS1/Trypsin.

It is found in the secreted. Functionally, inhibitor of serine proteases. The primary target is elastase, but also has a moderate affinity for plasmin and thrombin. In Mus saxicola (Brown spiny mouse), this protein is Alpha-1-antiproteinase (Serpina1).